A 363-amino-acid polypeptide reads, in one-letter code: Ribosome-binding ATPase YchF (363 aa).

The OBG-type G domain maps to 3 to 256 (FKCGIVGLPN…LDDEEKVEFL (254 aa)). Residue 12 to 17 (NVGKST) coordinates ATP. The Mg(2+) site is built by Ser16 and Thr36. Residues 278 to 361 (NLQTYFTAGV…QDGDVMHFRF (84 aa)) form the TGS domain.

Mg(2+) is required as a cofactor.

Functionally, ATPase that binds to both the 70S ribosome and the 50S ribosomal subunit in a nucleotide-independent manner. Does not hydrolyze GTP. This chain is Ribosome-binding ATPase YchF, found in Haemophilus influenzae (strain ATCC 51907 / DSM 11121 / KW20 / Rd).